A 510-amino-acid chain; its full sequence is RanBP-type and C3HC4-type zinc finger-containing protein 1 (510 aa).

Met-1 is subject to N-acetylmethionine. The interaction with IRF3 stretch occupies residues 1 to 220; sequence MDEKTKKAEE…PGCEMCCRAR (220 aa). The interaction with TAB2 stretch occupies residues 1 to 270; it reads MDEKTKKAEE…NYLQHVQLDQ (270 aa). Ser-50 is modified (phosphoserine). Positions 55–119 constitute a Ubiquitin-like domain; sequence IRLWVSVEDA…DQETLHSHGV (65 aa). An interaction with RNF31 region spans residues 69-131; that stretch reads VTIWLTVRPD…NGDSAYLYLL (63 aa). The interval 160-192 is disordered; the sequence is LTLQPRGPLEPGPPKPGVPQEPGRGQPDAVPEP. The segment covering 167–178 has biased composition (pro residues); the sequence is PLEPGPPKPGVP. A RanBP2-type zinc finger spans residues 193–222; that stretch reads PPVGWQCPGCTFINKPTRPGCEMCCRARPE. A coiled-coil region spans residues 233–261; it reads DEEERARLAGEEEALRQYQQRKQQQQEGN. Residues 278-506 form a TRIAD supradomain region; the sequence is EPAECPVCYS…VNGIPCHPSC (229 aa). Zn(2+)-binding residues include Cys-282, Cys-285, Cys-300, His-302, Cys-305, Cys-308, and Cys-323. The RING-type 1 zinc finger occupies 282-332; the sequence is CPVCYSVLAPGEAVVLRECLHTFCRECLQGTIRNSQEAEVSCPFIDNTYSC. Tyr-330 bears the Phosphotyrosine mark. 11 residues coordinate Zn(2+): Cys-332, Cys-371, Cys-376, Cys-391, Cys-394, Cys-399, Cys-402, His-406, Cys-411, Cys-447, and Cys-450. An IBR-type zinc finger spans residues 351–411; the sequence is QRFLDLGISI…CKAIHEQMNC (61 aa). The segment at 447-476 adopts an RING-type 2; atypical zinc-finger fold; the sequence is CPQCQIVVQKKDGCDWIRCTVCHTEICWVT. Cys-460 is an active-site residue. Zn(2+) is bound by residues Cys-465 and Cys-468.

The protein belongs to the RBR family. Component of the LUBAC complex (linear ubiquitin chain assembly complex) which consists of SHARPIN, RBCK1 and RNF31. LUBAC has a MW of approximately 600 kDa suggesting a heteromultimeric assembly of its subunits. Interacts with beta-I-type (PRKCB1) and zeta-type protein kinase C (PRKCZ). Interacts with UBE2L3. Interacts with PRKCH. Associates with the TNF-R1 signaling complex (TNF-RSC) in a stimulation-dependent manner. Interacts with EYA1, TAB2, TAB3, MAP3K7 TRAF6 and RIPK1. Interacts with IRF3. In terms of assembly, interacts with IREB2 only in iron-rich conditions. As to quaternary structure, (Microbial infection) Interacts with hepatitis B virus/HBV protein HBx; this interaction is required to activate transcription of the viral genome. Auto-ubiquitinated. Auto-ubiquitination leads to degradation by the proteasome. In terms of processing, phosphorylated. In vitro, phosphorylation inhibits auto-ubiquitination activity. Post-translationally, (Microbial infection) Ubiquitinated by S.flexneri E3 ubiquitin-protein ligases IpaH1.4 and IpaH2.5, leading to its degradation by the proteasome, thereby preventing formation of the bacterial ubiquitin coat and activation of innate immunity.

It catalyses the reaction [E2 ubiquitin-conjugating enzyme]-S-ubiquitinyl-L-cysteine + [acceptor protein]-L-lysine = [E2 ubiquitin-conjugating enzyme]-L-cysteine + [acceptor protein]-N(6)-ubiquitinyl-L-lysine.. Its pathway is protein modification; protein ubiquitination. E3 ubiquitin-protein ligase, which accepts ubiquitin from specific E2 ubiquitin-conjugating enzymes, such as UBE2L3/UBCM4, and then transfers it to substrates. Functions as an E3 ligase for oxidized IREB2 and both heme and oxygen are necessary for IREB2 ubiquitination. Promotes ubiquitination of TAB2 and IRF3 and their degradation by the proteasome. Component of the LUBAC complex which conjugates linear ('Met-1'-linked) polyubiquitin chains to substrates and plays a key role in NF-kappa-B activation and regulation of inflammation. LUBAC conjugates linear polyubiquitin to IKBKG and RIPK1 and is involved in activation of the canonical NF-kappa-B and the JNK signaling pathways. Linear ubiquitination mediated by the LUBAC complex interferes with TNF-induced cell death and thereby prevents inflammation. LUBAC is recruited to the TNF-R1 signaling complex (TNF-RSC) following polyubiquitination of TNF-RSC components by BIRC2 and/or BIRC3 and to conjugate linear polyubiquitin to IKBKG and possibly other components contributing to the stability of the complex. The LUBAC complex is also involved in innate immunity by conjugating linear polyubiquitin chains at the surface of bacteria invading the cytosol to form the ubiquitin coat surrounding bacteria. LUBAC is not able to initiate formation of the bacterial ubiquitin coat, and can only promote formation of linear polyubiquitins on pre-existing ubiquitin. The bacterial ubiquitin coat acts as an 'eat-me' signal for xenophagy and promotes NF-kappa-B activation. Together with OTULIN, the LUBAC complex regulates the canonical Wnt signaling during angiogenesis. Binds polyubiquitin of different linkage types. The protein is RanBP-type and C3HC4-type zinc finger-containing protein 1 (RBCK1) of Homo sapiens (Human).